We begin with the raw amino-acid sequence, 285 residues long: Pantothenate synthetase (285 aa).

30–37 (MGNLHDGH) contributes to the ATP binding site. Histidine 37 acts as the Proton donor in catalysis. Glutamine 61 is a (R)-pantoate binding site. Glutamine 61 serves as a coordination point for beta-alanine. 149 to 152 (GEKD) lines the ATP pocket. Glutamine 155 is a (R)-pantoate binding site. ATP-binding positions include isoleucine 178 and 186–189 (LSSR).

This sequence belongs to the pantothenate synthetase family. As to quaternary structure, homodimer.

The protein resides in the cytoplasm. The catalysed reaction is (R)-pantoate + beta-alanine + ATP = (R)-pantothenate + AMP + diphosphate + H(+). The protein operates within cofactor biosynthesis; (R)-pantothenate biosynthesis; (R)-pantothenate from (R)-pantoate and beta-alanine: step 1/1. Catalyzes the condensation of pantoate with beta-alanine in an ATP-dependent reaction via a pantoyl-adenylate intermediate. The chain is Pantothenate synthetase from Buchnera aphidicola subsp. Acyrthosiphon pisum (strain 5A).